Reading from the N-terminus, the 405-residue chain is GTPase Obg (405 aa).

Positions 1–159 constitute an Obg domain; that stretch reads MKFVDEVSIF…RDLKLELKVL (159 aa). Positions 127-148 are disordered; sequence NTRFKSSTNRAPRQTTPGKPGE. Positions 129 to 143 are enriched in polar residues; it reads RFKSSTNRAPRQTTP. Positions 160-333 constitute an OBG-type G domain; it reads ADVGLLGLPN…LCQDIMHYLD (174 aa). Residues 166–173, 191–195, 213–216, 283–286, and 314–316 contribute to the GTP site; these read GLPNAGKS, FTTLV, DIPG, NKAD, and SAL. Residues Ser173 and Thr193 each contribute to the Mg(2+) site. Over residues 383-398 the composition is skewed to acidic residues; the sequence is ALEDEDDFDDEDDGDG. The disordered stretch occupies residues 383-405; that stretch reads ALEDEDDFDDEDDGDGPEIFYVR.

Belongs to the TRAFAC class OBG-HflX-like GTPase superfamily. OBG GTPase family. In terms of assembly, monomer. Requires Mg(2+) as cofactor.

Its subcellular location is the cytoplasm. Functionally, an essential GTPase which binds GTP, GDP and possibly (p)ppGpp with moderate affinity, with high nucleotide exchange rates and a fairly low GTP hydrolysis rate. Plays a role in control of the cell cycle, stress response, ribosome biogenesis and in those bacteria that undergo differentiation, in morphogenesis control. This Azotobacter vinelandii (strain DJ / ATCC BAA-1303) protein is GTPase Obg.